Reading from the N-terminus, the 23-residue chain is Caerulein precursor fragment BM2 (23 aa).

Expressed by the skin glands.

The protein resides in the secreted. Functionally, antimicrobial peptide. The sequence is that of Caerulein precursor fragment BM2 from Xenopus boumbaensis (Mawa clawed frog).